The sequence spans 75 residues: UPF0346 protein LEUM_0763 (75 aa).

This sequence belongs to the UPF0346 family.

This is UPF0346 protein LEUM_0763 from Leuconostoc mesenteroides subsp. mesenteroides (strain ATCC 8293 / DSM 20343 / BCRC 11652 / CCM 1803 / JCM 6124 / NCDO 523 / NBRC 100496 / NCIMB 8023 / NCTC 12954 / NRRL B-1118 / 37Y).